A 430-amino-acid chain; its full sequence is Glutamate-1-semialdehyde 2,1-aminomutase (430 aa).

Lysine 265 is subject to N6-(pyridoxal phosphate)lysine.

This sequence belongs to the class-III pyridoxal-phosphate-dependent aminotransferase family. HemL subfamily. Homodimer. Requires pyridoxal 5'-phosphate as cofactor.

Its subcellular location is the cytoplasm. The catalysed reaction is (S)-4-amino-5-oxopentanoate = 5-aminolevulinate. Its pathway is porphyrin-containing compound metabolism; protoporphyrin-IX biosynthesis; 5-aminolevulinate from L-glutamyl-tRNA(Glu): step 2/2. The polypeptide is Glutamate-1-semialdehyde 2,1-aminomutase (Shewanella baltica (strain OS155 / ATCC BAA-1091)).